The following is a 295-amino-acid chain: Mediator of RNA polymerase II transcription subunit 6 (295 aa).

Residues Thr-211–Ser-243 form a disordered region. Ser-225 is subject to Phosphoserine.

It belongs to the Mediator complex subunit 6 family. In terms of assembly, component of the Mediator complex, which is composed of at least 21 subunits that form three structurally distinct submodules. The Mediator head module contains MED6, MED8, MED11, SRB4/MED17, SRB5/MED18, ROX3/MED19, SRB2/MED20 and SRB6/MED22, the middle module contains MED1, MED4, NUT1/MED5, MED7, CSE2/MED9, NUT2/MED10, SRB7/MED21 and SOH1/MED31, and the tail module contains MED2, PGD1/MED3, RGR1/MED14, GAL11/MED15 and SIN4/MED16. The head and the middle modules interact directly with RNA polymerase II, whereas the elongated tail module interacts with gene-specific regulatory proteins. MED6 interacts directly with SRB4/MED17 and SRB7/MED21.

Its subcellular location is the nucleus. Component of the Mediator complex, a coactivator involved in the regulated transcription of nearly all RNA polymerase II-dependent genes. Mediator functions as a bridge to convey information from gene-specific regulatory proteins to the basal RNA polymerase II transcription machinery. The Mediator complex, having a compact conformation in its free form, is recruited to promoters by direct interactions with regulatory proteins and serves for the assembly of a functional preinitiation complex with RNA polymerase II and the general transcription factors. The Mediator complex unfolds to an extended conformation and partially surrounds RNA polymerase II, specifically interacting with the unphosphorylated form of the C-terminal domain (CTD) of RNA polymerase II. The Mediator complex dissociates from the RNA polymerase II holoenzyme and stays at the promoter when transcriptional elongation begins. This is Mediator of RNA polymerase II transcription subunit 6 (MED6) from Saccharomyces cerevisiae (strain ATCC 204508 / S288c) (Baker's yeast).